The sequence spans 340 residues: Mitochondrial distribution and morphology protein 12 (340 aa).

The 321-residue stretch at 1–321 (MSIDLDWDGM…WPSWIKVSME (321 aa)) folds into the SMP-LTD domain. Disordered stretches follow at residues 79–107 (HYLPPLHPPQQRRSAPSTPHIHTNTTNPI), 161–184 (SVRESTAPRTPEEREQQPVPEDRE), and 319–340 (SMEDEDSDDEEGEEEGDQEDEH). Over residues 89–106 (QRRSAPSTPHIHTNTTNP) the composition is skewed to polar residues. Positions 321–340 (EDEDSDDEEGEEEGDQEDEH) are enriched in acidic residues.

Belongs to the MDM12 family. Component of the ER-mitochondria encounter structure (ERMES) or MDM complex, composed of MMM1, MDM10, MDM12 and MDM34. An MMM1 homodimer associates with one molecule of MDM12 on each side in a pairwise head-to-tail manner, and the SMP-LTD domains of MMM1 and MDM12 generate a continuous hydrophobic tunnel for phospholipid trafficking.

It localises to the mitochondrion outer membrane. It is found in the endoplasmic reticulum membrane. Component of the ERMES/MDM complex, which serves as a molecular tether to connect the endoplasmic reticulum (ER) and mitochondria. Components of this complex are involved in the control of mitochondrial shape and protein biogenesis, and function in nonvesicular lipid trafficking between the ER and mitochondria. MDM12 is required for the interaction of the ER-resident membrane protein MMM1 and the outer mitochondrial membrane-resident beta-barrel protein MDM10. The MDM12-MMM1 subcomplex functions in the major beta-barrel assembly pathway that is responsible for biogenesis of all mitochondrial outer membrane beta-barrel proteins, and acts in a late step after the SAM complex. The MDM10-MDM12-MMM1 subcomplex further acts in the TOM40-specific pathway after the action of the MDM12-MMM1 complex. Essential for establishing and maintaining the structure of mitochondria and maintenance of mtDNA nucleoids. This Yarrowia lipolytica (strain CLIB 122 / E 150) (Yeast) protein is Mitochondrial distribution and morphology protein 12.